The primary structure comprises 83 residues: Small ribosomal subunit protein uS17 (83 aa).

Belongs to the universal ribosomal protein uS17 family. In terms of assembly, part of the 30S ribosomal subunit.

One of the primary rRNA binding proteins, it binds specifically to the 5'-end of 16S ribosomal RNA. This is Small ribosomal subunit protein uS17 from Chlamydia muridarum (strain MoPn / Nigg).